We begin with the raw amino-acid sequence, 150 residues long: Large ribosomal subunit protein bL9 (150 aa).

This sequence belongs to the bacterial ribosomal protein bL9 family.

Functionally, binds to the 23S rRNA. The polypeptide is Large ribosomal subunit protein bL9 (Shewanella baltica (strain OS155 / ATCC BAA-1091)).